A 667-amino-acid polypeptide reads, in one-letter code: Polypeptide N-acetylgalactosaminyltransferase 3 (667 aa).

Residues 1 to 12 lie on the Cytoplasmic side of the membrane; it reads MGLRFQQLKKLW. The chain crosses the membrane as a helical; Signal-anchor for type II membrane protein span at residues 13–35; that stretch reads LLYLFLLFFAFFMFAISINLYVA. The Lumenal portion of the chain corresponds to 36–667; it reads SIQGGDAEMR…WGFIPLPWRM (632 aa). Residues N75 and N129 are each glycosylated (N-linked (GlcNAc...) asparagine). Disulfide bonds link C140-C375, C366-C446, C526-C547, C572-C601, and C626-C649. The catalytic subdomain A stretch occupies residues 149–259; it reads LPSTSVIIVF…RGWLEPLLSR (111 aa). Substrate is bound by residues D190 and R220. 2 residues coordinate Mn(2+): D243 and H245. N-linked (GlcNAc...) asparagine glycans are attached at residues N279 and N313. Positions 321 to 383 are catalytic subdomain B; that stretch reads PIATPGMAGG…PCSHVGHVFR (63 aa). Position 352 (W352) interacts with substrate. H380 provides a ligand contact to Mn(2+). 2 residues coordinate substrate: R383 and Y388. N433 is a glycosylation site (N-linked (GlcNAc...) asparagine). Positions 513–661 constitute a Ricin B-type lectin domain; it reads EELMALIDLE…KDITQKWGFI (149 aa). N-linked (GlcNAc...) asparagine glycosylation occurs at N590.

This sequence belongs to the glycosyltransferase 2 family. GalNAc-T subfamily. Mn(2+) is required as a cofactor. In terms of tissue distribution, expressed in developing oocytes and egg chambers. During embryonic stages 9-11, expressed in the primordiums of the foregut, midgut and hindgut. During embryonic stages 12-13, expression is found uniquely in the posterior spiracle. During embryonic stages 14-17, expressed in the pharynx, esophagus and posterior spiracles. Expression observed in the epidermis during embryonic stages 16-17. In third instar larvae, expressed ubiquitously in wing, with increased expression in pleura and notum, eye-antennal, leg and haltere imaginal disks.

The protein localises to the golgi apparatus membrane. The catalysed reaction is L-seryl-[protein] + UDP-N-acetyl-alpha-D-galactosamine = a 3-O-[N-acetyl-alpha-D-galactosaminyl]-L-seryl-[protein] + UDP + H(+). It catalyses the reaction L-threonyl-[protein] + UDP-N-acetyl-alpha-D-galactosamine = a 3-O-[N-acetyl-alpha-D-galactosaminyl]-L-threonyl-[protein] + UDP + H(+). It functions in the pathway protein modification; protein glycosylation. In terms of biological role, catalyzes the initial reaction in O-linked oligosaccharide biosynthesis, the transfer of an N-acetyl-D-galactosamine residue to a serine or threonine residue on the protein receptor. It can both act as a peptide transferase that transfers GalNAc onto unmodified peptide substrates, and as a glycopeptide transferase that requires the prior addition of a GalNAc on a peptide before adding additional GalNAc moieties. Prefers EA2 as substrate. Has weak activity toward Muc5AC-3, -13 and -3/13 substrates. Plays a critical role in the regulation of integrin-mediated cell adhesion during wing development by influencing, via glycosylation, the secretion and localization of the integrin ligand Tig to the basal cell layer interface. Might have a role in protein O-glycosylation in the Golgi and thereby in establishing and/or maintaining a proper secretory apparatus structure. Together with Pgant35A, regulates integrin levels and activity-dependent integrin signaling at the synapse in neurons and muscles. The protein is Polypeptide N-acetylgalactosaminyltransferase 3 of Drosophila melanogaster (Fruit fly).